A 251-amino-acid polypeptide reads, in one-letter code: Adenosine 5'-phosphosulfate reductase (251 aa).

[4Fe-4S] cluster contacts are provided by cysteine 121, cysteine 122, cysteine 204, and cysteine 207. Cysteine 232 functions as the Nucleophile; cysteine thiosulfonate intermediate in the catalytic mechanism.

This sequence belongs to the PAPS reductase family. CysH subfamily. It depends on [4Fe-4S] cluster as a cofactor.

The protein resides in the cytoplasm. The catalysed reaction is [thioredoxin]-disulfide + sulfite + AMP + 2 H(+) = adenosine 5'-phosphosulfate + [thioredoxin]-dithiol. It functions in the pathway sulfur metabolism; hydrogen sulfide biosynthesis; sulfite from sulfate. Functionally, catalyzes the formation of sulfite from adenosine 5'-phosphosulfate (APS) using thioredoxin as an electron donor. This is Adenosine 5'-phosphosulfate reductase from Sinorhizobium fredii (strain NBRC 101917 / NGR234).